Here is a 351-residue protein sequence, read N- to C-terminus: Dihydroorotate dehydrogenase (quinone) (351 aa).

FMN is bound by residues 67 to 71 and Thr-91; that span reads AGFDK. Lys-71 contacts substrate. 116–120 is a binding site for substrate; it reads NAMGF. Residues Asn-145 and Asn-178 each coordinate FMN. Asn-178 is a substrate binding site. Catalysis depends on Ser-181, which acts as the Nucleophile. Substrate is bound at residue Asn-183. FMN contacts are provided by Lys-214 and Thr-242. A substrate-binding site is contributed by 243-244; the sequence is NT. FMN is bound by residues Gly-262, Gly-291, and 312–313; that span reads YS.

It belongs to the dihydroorotate dehydrogenase family. Type 2 subfamily. As to quaternary structure, monomer. The cofactor is FMN.

Its subcellular location is the cell membrane. It carries out the reaction (S)-dihydroorotate + a quinone = orotate + a quinol. Its pathway is pyrimidine metabolism; UMP biosynthesis via de novo pathway; orotate from (S)-dihydroorotate (quinone route): step 1/1. Catalyzes the conversion of dihydroorotate to orotate with quinone as electron acceptor. The chain is Dihydroorotate dehydrogenase (quinone) from Helicobacter pylori (strain HPAG1).